The following is a 354-amino-acid chain: Uroporphyrinogen decarboxylase (354 aa).

Substrate is bound by residues 27–31, Asp77, Tyr154, Thr209, and His327; that span reads RQAGR.

This sequence belongs to the uroporphyrinogen decarboxylase family. Homodimer.

It localises to the cytoplasm. The enzyme catalyses uroporphyrinogen III + 4 H(+) = coproporphyrinogen III + 4 CO2. It participates in porphyrin-containing compound metabolism; protoporphyrin-IX biosynthesis; coproporphyrinogen-III from 5-aminolevulinate: step 4/4. Functionally, catalyzes the decarboxylation of four acetate groups of uroporphyrinogen-III to yield coproporphyrinogen-III. The sequence is that of Uroporphyrinogen decarboxylase from Shigella dysenteriae serotype 1 (strain Sd197).